Here is a 355-residue protein sequence, read N- to C-terminus: Phospho-N-acetylmuramoyl-pentapeptide-transferase (355 aa).

10 consecutive transmembrane segments (helical) span residues 3–23, 56–76, 80–100, 120–140, 152–172, 185–205, 224–244, 251–271, 276–296, and 330–350; these read GVLI…PWVI, VIIV…GIGF, GLLV…DDYI, AAVA…AGLL, TSLT…IAAT, LAAG…FWQF, PLDV…FLWW, IFMG…IAIV, LLLV…MIQV, and FWIV…AEFL.

It belongs to the glycosyltransferase 4 family. MraY subfamily. Mg(2+) serves as cofactor.

The protein localises to the cell membrane. The enzyme catalyses UDP-N-acetyl-alpha-D-muramoyl-L-alanyl-gamma-D-glutamyl-meso-2,6-diaminopimeloyl-D-alanyl-D-alanine + di-trans,octa-cis-undecaprenyl phosphate = di-trans,octa-cis-undecaprenyl diphospho-N-acetyl-alpha-D-muramoyl-L-alanyl-D-glutamyl-meso-2,6-diaminopimeloyl-D-alanyl-D-alanine + UMP. Its pathway is cell wall biogenesis; peptidoglycan biosynthesis. Functionally, catalyzes the initial step of the lipid cycle reactions in the biosynthesis of the cell wall peptidoglycan: transfers peptidoglycan precursor phospho-MurNAc-pentapeptide from UDP-MurNAc-pentapeptide onto the lipid carrier undecaprenyl phosphate, yielding undecaprenyl-pyrophosphoryl-MurNAc-pentapeptide, known as lipid I. This Frankia alni (strain DSM 45986 / CECT 9034 / ACN14a) protein is Phospho-N-acetylmuramoyl-pentapeptide-transferase.